Consider the following 387-residue polypeptide: Mitogen-activated protein kinase homolog MMK1 (387 aa).

Residues 55 to 340 (KPPIMPIGKG…VEDALAHPYL (286 aa)) form the Protein kinase domain. ATP contacts are provided by residues 61–69 (IGKGAYGIV) and Lys84. The active-site Proton acceptor is the Asp181. A Phosphothreonine modification is found at Thr213. The TXY motif lies at 213–215 (TEY). Tyr215 is subject to Phosphotyrosine.

It belongs to the protein kinase superfamily. CMGC Ser/Thr protein kinase family. MAP kinase subfamily. The cofactor is Mg(2+). Dually phosphorylated on Thr-213 and Tyr-215, which activates the enzyme. Autophosphorylated. In terms of tissue distribution, roots and stems.

The catalysed reaction is L-seryl-[protein] + ATP = O-phospho-L-seryl-[protein] + ADP + H(+). It catalyses the reaction L-threonyl-[protein] + ATP = O-phospho-L-threonyl-[protein] + ADP + H(+). Its activity is regulated as follows. Activated by tyrosine and threonine phosphorylation. May play a role in the mitogenic induction of symbiotic root nodules on Alfalfa by Rhizobium signal molecules. This chain is Mitogen-activated protein kinase homolog MMK1 (MMK1), found in Medicago sativa (Alfalfa).